Reading from the N-terminus, the 227-residue chain is Cytochrome c oxidase subunit 2 (227 aa).

Topologically, residues 1–14 (MAYPMQLGFQDATS) are mitochondrial intermembrane. Residues 15 to 45 (PIMEELLHFHDHTLMIVLLISSLVLYIISLM) traverse the membrane as a helical segment. At 46–59 (LTTKLTHTSTMDAQ) the chain is on the mitochondrial matrix side. The helical transmembrane segment at 60–87 (EVETIWTILPAIILILIALPSLRILYMM) threads the bilayer. The Mitochondrial intermembrane segment spans residues 88-227 (DEINNPSLTV…YFEKWSASML (140 aa)). Cu cation-binding residues include histidine 161, cysteine 196, glutamate 198, cysteine 200, histidine 204, and methionine 207. Glutamate 198 is a binding site for Mg(2+). Position 218 is a phosphotyrosine (tyrosine 218).

The protein belongs to the cytochrome c oxidase subunit 2 family. As to quaternary structure, component of the cytochrome c oxidase (complex IV, CIV), a multisubunit enzyme composed of 14 subunits. The complex is composed of a catalytic core of 3 subunits MT-CO1, MT-CO2 and MT-CO3, encoded in the mitochondrial DNA, and 11 supernumerary subunits COX4I, COX5A, COX5B, COX6A, COX6B, COX6C, COX7A, COX7B, COX7C, COX8 and NDUFA4, which are encoded in the nuclear genome. The complex exists as a monomer or a dimer and forms supercomplexes (SCs) in the inner mitochondrial membrane with NADH-ubiquinone oxidoreductase (complex I, CI) and ubiquinol-cytochrome c oxidoreductase (cytochrome b-c1 complex, complex III, CIII), resulting in different assemblies (supercomplex SCI(1)III(2)IV(1) and megacomplex MCI(2)III(2)IV(2)). Found in a complex with TMEM177, COA6, COX18, COX20, SCO1 and SCO2. Interacts with TMEM177 in a COX20-dependent manner. Interacts with COX20. Interacts with COX16. Cu cation is required as a cofactor.

Its subcellular location is the mitochondrion inner membrane. The enzyme catalyses 4 Fe(II)-[cytochrome c] + O2 + 8 H(+)(in) = 4 Fe(III)-[cytochrome c] + 2 H2O + 4 H(+)(out). Functionally, component of the cytochrome c oxidase, the last enzyme in the mitochondrial electron transport chain which drives oxidative phosphorylation. The respiratory chain contains 3 multisubunit complexes succinate dehydrogenase (complex II, CII), ubiquinol-cytochrome c oxidoreductase (cytochrome b-c1 complex, complex III, CIII) and cytochrome c oxidase (complex IV, CIV), that cooperate to transfer electrons derived from NADH and succinate to molecular oxygen, creating an electrochemical gradient over the inner membrane that drives transmembrane transport and the ATP synthase. Cytochrome c oxidase is the component of the respiratory chain that catalyzes the reduction of oxygen to water. Electrons originating from reduced cytochrome c in the intermembrane space (IMS) are transferred via the dinuclear copper A center (CU(A)) of subunit 2 and heme A of subunit 1 to the active site in subunit 1, a binuclear center (BNC) formed by heme A3 and copper B (CU(B)). The BNC reduces molecular oxygen to 2 water molecules using 4 electrons from cytochrome c in the IMS and 4 protons from the mitochondrial matrix. This chain is Cytochrome c oxidase subunit 2 (MT-CO2), found in Bubalus depressicornis (Lowland anoa).